The chain runs to 449 residues: UDP-N-acetylmuramate--L-alanine ligase (449 aa).

ATP is bound at residue 121-127 (GAHGKSS).

The protein belongs to the MurCDEF family.

The protein localises to the cytoplasm. It carries out the reaction UDP-N-acetyl-alpha-D-muramate + L-alanine + ATP = UDP-N-acetyl-alpha-D-muramoyl-L-alanine + ADP + phosphate + H(+). It functions in the pathway cell wall biogenesis; peptidoglycan biosynthesis. Its function is as follows. Cell wall formation. The sequence is that of UDP-N-acetylmuramate--L-alanine ligase from Helicobacter pylori (strain J99 / ATCC 700824) (Campylobacter pylori J99).